A 310-amino-acid polypeptide reads, in one-letter code: Methionyl-tRNA formyltransferase (310 aa).

Residue 111 to 114 coordinates (6S)-5,6,7,8-tetrahydrofolate; that stretch reads SILP.

The protein belongs to the Fmt family.

The catalysed reaction is L-methionyl-tRNA(fMet) + (6R)-10-formyltetrahydrofolate = N-formyl-L-methionyl-tRNA(fMet) + (6S)-5,6,7,8-tetrahydrofolate + H(+). Its function is as follows. Attaches a formyl group to the free amino group of methionyl-tRNA(fMet). The formyl group appears to play a dual role in the initiator identity of N-formylmethionyl-tRNA by promoting its recognition by IF2 and preventing the misappropriation of this tRNA by the elongation apparatus. The chain is Methionyl-tRNA formyltransferase from Methylobacterium nodulans (strain LMG 21967 / CNCM I-2342 / ORS 2060).